We begin with the raw amino-acid sequence, 149 residues long: Putative glycine cleavage system H protein 3 (149 aa).

In terms of domain architecture, Lipoyl-binding spans 39 to 121; the sequence is TCTLGITKYA…EDKGWLIKME (83 aa). K80 is subject to N6-lipoyllysine.

Belongs to the GcvH family. As to quaternary structure, the glycine cleavage system is composed of four proteins: P, T, L and H. (R)-lipoate is required as a cofactor.

Functionally, the glycine cleavage system catalyzes the degradation of glycine. The H protein shuttles the methylamine group of glycine from the P protein to the T protein. In Dictyostelium discoideum (Social amoeba), this protein is Putative glycine cleavage system H protein 3 (gcvH3).